A 273-amino-acid chain; its full sequence is Shikimate dehydrogenase (NADP(+)) (273 aa).

Residues 15–17 (SLS) and T62 contribute to the shikimate site. K66 serves as the catalytic Proton acceptor. E78 provides a ligand contact to NADP(+). Shikimate contacts are provided by N87 and D102. NADP(+)-binding positions include 126-130 (GAGGA), 149-154 (NRTPER), I215, and G238.

This sequence belongs to the shikimate dehydrogenase family. As to quaternary structure, homodimer.

It catalyses the reaction shikimate + NADP(+) = 3-dehydroshikimate + NADPH + H(+). The protein operates within metabolic intermediate biosynthesis; chorismate biosynthesis; chorismate from D-erythrose 4-phosphate and phosphoenolpyruvate: step 4/7. Involved in the biosynthesis of the chorismate, which leads to the biosynthesis of aromatic amino acids. Catalyzes the reversible NADPH linked reduction of 3-dehydroshikimate (DHSA) to yield shikimate (SA). This Desulfitobacterium hafniense (strain Y51) protein is Shikimate dehydrogenase (NADP(+)).